A 623-amino-acid polypeptide reads, in one-letter code: (-)-limonene synthase TPS1, chloroplastic (623 aa).

The transit peptide at 1 to 60 directs the protein to the chloroplast; sequence MQCIAFHQFASSSSLPIWSSIDNRFTPKTSITSISKPKPKLKSKSNLKSRSRSSTCYPIQ. Positions 29–52 are disordered; the sequence is TSITSISKPKPKLKSKSNLKSRSR. A compositionally biased stretch (basic residues) spans 37–51; the sequence is PKPKLKSKSNLKSRS. (2E)-geranyl diphosphate is bound by residues Arg-337, Asp-374, Asp-378, Arg-516, and Asp-519. Mg(2+)-binding residues include Asp-374 and Asp-378. The short motif at 374-378 is the DDXXD motif element; sequence DDMHD. Mg(2+)-binding residues include Asp-519, Thr-523, and Glu-527.

It belongs to the terpene synthase family. Tpsb subfamily. Requires Mg(2+) as cofactor. It depends on Mn(2+) as a cofactor. K(+) serves as cofactor. As to expression, trichome.

It is found in the plastid. The protein localises to the chloroplast. The enzyme catalyses (2E)-geranyl diphosphate = (4S)-limonene + diphosphate. It catalyses the reaction (2E)-geranyl diphosphate = terpinolene + diphosphate. The catalysed reaction is (2E)-geranyl diphosphate = (1R,5R)-alpha-pinene + diphosphate. It carries out the reaction (2E)-geranyl diphosphate = (1R,5R)-beta-pinene + diphosphate. The enzyme catalyses (2E)-geranyl diphosphate = beta-myrcene + diphosphate. It catalyses the reaction (2E)-geranyl diphosphate = (4R)-limonene + diphosphate. Its pathway is secondary metabolite biosynthesis; terpenoid biosynthesis. It functions in the pathway terpene metabolism; (4S)-limonene biosynthesis; (4S)-limonene from geranyl diphosphate: step 1/1. In terms of biological role, involved in monoterpene (C10) olefins biosynthesis, constituants of cannabinoids and terpenoids-rich resins. Catalyzes mainly the conversion of (2E)-geranyl diphosphate to (-)-limonene, and also produces minor products such as (+)-limonene, (+)-alpha-pinene, terpinolene, (+)-beta-pinene and beta-myrcene. This chain is (-)-limonene synthase TPS1, chloroplastic, found in Cannabis sativa (Hemp).